A 152-amino-acid polypeptide reads, in one-letter code: Deoxyuridine 5'-triphosphate nucleotidohydrolase (152 aa).

Substrate is bound by residues 71-73 (RSG), N84, 88-90 (LID), and M98.

The protein belongs to the dUTPase family. Mg(2+) serves as cofactor.

The catalysed reaction is dUTP + H2O = dUMP + diphosphate + H(+). It functions in the pathway pyrimidine metabolism; dUMP biosynthesis; dUMP from dCTP (dUTP route): step 2/2. Its function is as follows. This enzyme is involved in nucleotide metabolism: it produces dUMP, the immediate precursor of thymidine nucleotides and it decreases the intracellular concentration of dUTP so that uracil cannot be incorporated into DNA. The sequence is that of Deoxyuridine 5'-triphosphate nucleotidohydrolase from Shewanella piezotolerans (strain WP3 / JCM 13877).